Consider the following 188-residue polypeptide: dCTP deaminase (188 aa).

DCTP is bound by residues 111–116 (KSTYAR), 135–137 (TLE), Gln156, Tyr170, and Gln180. Glu137 functions as the Proton donor/acceptor in the catalytic mechanism.

This sequence belongs to the dCTP deaminase family. In terms of assembly, homotrimer.

It carries out the reaction dCTP + H2O + H(+) = dUTP + NH4(+). It participates in pyrimidine metabolism; dUMP biosynthesis; dUMP from dCTP (dUTP route): step 1/2. Functionally, catalyzes the deamination of dCTP to dUTP. The polypeptide is dCTP deaminase (Ectopseudomonas mendocina (strain ymp) (Pseudomonas mendocina)).